Consider the following 461-residue polypeptide: Serine carboxypeptidase-like 45 (461 aa).

The signal sequence occupies residues 1–24; that stretch reads MSPLQWLTISFALIIFHSLTVSSS. Disulfide bonds link Cys-86–Cys-340, Cys-243–Cys-261, and Cys-286–Cys-309. Asn-168 is a glycosylation site (N-linked (GlcNAc...) asparagine). The active site involves Ser-177. An N-linked (GlcNAc...) asparagine glycan is attached at Asn-244. Active-site residues include Asp-377 and His-434.

The protein belongs to the peptidase S10 family. Ubiquitous.

The protein resides in the secreted. In terms of biological role, probable carboxypeptidase. The sequence is that of Serine carboxypeptidase-like 45 (SCPL45) from Arabidopsis thaliana (Mouse-ear cress).